A 168-amino-acid chain; its full sequence is uncharacterized protein (168 aa).

This is an uncharacterized protein from Mycoplasma pneumoniae (strain ATCC 29342 / M129 / Subtype 1) (Mycoplasmoides pneumoniae).